The sequence spans 594 residues: Putative diflavin flavoprotein A 4 (594 aa).

The zinc metallo-hydrolase stretch occupies residues 57–250 (RRGTTSNSYL…LTLKMIAPGH (194 aa)). The Flavodoxin-like domain occupies 279 to 417 (VALIYASAYG…VCTTSGANFA (139 aa)). Residues 445 to 594 (VGRIIGSIGV…IRHRKSGGQY (150 aa)) form a flavodoxin-reductase-like region.

It in the N-terminal section; belongs to the zinc metallo-hydrolase group 3 family. This sequence in the C-terminal section; belongs to the flavodoxin reductase family. It depends on Fe cation as a cofactor.

Its function is as follows. Mediates electron transfer from NADH to oxygen, reducing it to water. This modular protein has 3 redox cofactors, in other organisms the same activity requires 2 or 3 proteins. This Synechocystis sp. (strain ATCC 27184 / PCC 6803 / Kazusa) protein is Putative diflavin flavoprotein A 4 (dfa4).